A 100-amino-acid chain; its full sequence is Aspartyl/glutamyl-tRNA(Asn/Gln) amidotransferase subunit C (100 aa).

The protein belongs to the GatC family. In terms of assembly, heterotrimer of A, B and C subunits.

The enzyme catalyses L-glutamyl-tRNA(Gln) + L-glutamine + ATP + H2O = L-glutaminyl-tRNA(Gln) + L-glutamate + ADP + phosphate + H(+). It catalyses the reaction L-aspartyl-tRNA(Asn) + L-glutamine + ATP + H2O = L-asparaginyl-tRNA(Asn) + L-glutamate + ADP + phosphate + 2 H(+). Its function is as follows. Allows the formation of correctly charged Asn-tRNA(Asn) or Gln-tRNA(Gln) through the transamidation of misacylated Asp-tRNA(Asn) or Glu-tRNA(Gln) in organisms which lack either or both of asparaginyl-tRNA or glutaminyl-tRNA synthetases. The reaction takes place in the presence of glutamine and ATP through an activated phospho-Asp-tRNA(Asn) or phospho-Glu-tRNA(Gln). This Streptococcus thermophilus (strain ATCC BAA-491 / LMD-9) protein is Aspartyl/glutamyl-tRNA(Asn/Gln) amidotransferase subunit C.